The chain runs to 104 residues: Large ribosomal subunit protein bL21 (104 aa).

The protein belongs to the bacterial ribosomal protein bL21 family. In terms of assembly, part of the 50S ribosomal subunit. Contacts protein L20.

In terms of biological role, this protein binds to 23S rRNA in the presence of protein L20. This Thermodesulfovibrio yellowstonii (strain ATCC 51303 / DSM 11347 / YP87) protein is Large ribosomal subunit protein bL21.